Consider the following 492-residue polypeptide: MGLFGMMKFAQTHHLVKRRGLRAPEGYFTPIAVDLWNVMYTLVVKYQRRYPSYDREAITLHCLCSMLRVFTQKSLFPIFVTDRGVECTEPVVFGAKAILARTTAQCRTDEEASDVDASPPPSPITDSRPSFAFSNMRRRGHAFAPGDRGTRAAGPGPAAPSGAPSKPALRLAHLFCIRVLRALGYAYINSGQLEADDACANLYHTNTVAYVHTTDTDLLLMGCDIVLDISTGYIPTIHCRDLLQYFKMSYPQFLALFVRCHTDLHPNNTYASVEDVLRECHWTAPSRSQARRAARRERANSRSLESMPTLTAAPVGLETRISWTEILAQQIAGEDDYEEDPPLQPPDVAGGPRDGARSSSSEILTPPELVQVPNAQRVAEHRGYVAGRRRHVIHDAPEALDWLPDPMTIAELVEHRYVKYVISLISPKERGPWTLLKRLPIYQDLRDEDLARSIVTRHITAPDIADRFLAQLWAHAPPPAFYKDVLAKFWDE.

Disordered regions lie at residues 110-130 (EEASDVDASPPPSPITDSRPS), 143-165 (FAPGDRGTRAAGPGPAAPSGAPS), 288-307 (SQARRAARRERANSRSLESM), and 334-369 (EDDYEEDPPLQPPDVAGGPRDGARSSSSEILTPPEL). Residues 144–165 (APGDRGTRAAGPGPAAPSGAPS) show a composition bias toward low complexity.

It belongs to the herpesviridae VHS protein family. Interacts with human EIF4H, EIF4A1 and EIF4A2; interaction with eIF4AI and EIF4A2 presumably allows Vhs protein to associate with the eIF4F cap-binding complex.

The protein localises to the virion. Functionally, minor structural protein that acts as an endoribonuclease during lytic infection. Degrades host mRNAs in the cytoplasm by cutting them at preferred sites, including some in regions of translation initiation. Together with inhibition of host splicing by ICP27, contributes to an overall decrease in host protein synthesis. Also, after the onset of viral transcription, accelerates the turnover of viral mRNA, thereby facilitating the sequential expression of different classes of viral genes. Binds translation initiation factors eIF4H, eIF4AI, and eIF4AII, thereby may interact directly with the translation initiation complex and thus digest specifically mRNAs. Also impedes antigen presentation by major histocompatibility complex class I and class II molecules, inhibits secretion of cytokines that would otherwise recruit lymphocytes and neutrophils cells to the site of infection and blocks the activation of dendritic cells. Impedes the alpha/beta interferon-mediated response to infection. Inhibits the integrated stress response (ISR) in the infected cell, this function requires the endonuclease activity. Stress granule formation is thus inhibited, which allows protein synthesis and viral replication. This chain is Virion host shutoff protein (UL41), found in Human herpesvirus 2 (strain G) (HHV-2).